Consider the following 207-residue polypeptide: Adenylyl-sulfate kinase (207 aa).

39 to 46 (GLSGAGKS) lines the ATP pocket. Serine 113 functions as the Phosphoserine intermediate in the catalytic mechanism.

Belongs to the APS kinase family.

The catalysed reaction is adenosine 5'-phosphosulfate + ATP = 3'-phosphoadenylyl sulfate + ADP + H(+). It functions in the pathway sulfur metabolism; hydrogen sulfide biosynthesis; sulfite from sulfate: step 2/3. In terms of biological role, catalyzes the synthesis of activated sulfate. In Vibrio vulnificus (strain CMCP6), this protein is Adenylyl-sulfate kinase.